The primary structure comprises 492 residues: Glutamyl-tRNA(Gln) amidotransferase subunit A (492 aa).

Catalysis depends on charge relay system residues Lys-77 and Ser-152. Ser-176 functions as the Acyl-ester intermediate in the catalytic mechanism.

This sequence belongs to the amidase family. GatA subfamily. In terms of assembly, heterotrimer of A, B and C subunits.

The enzyme catalyses L-glutamyl-tRNA(Gln) + L-glutamine + ATP + H2O = L-glutaminyl-tRNA(Gln) + L-glutamate + ADP + phosphate + H(+). In terms of biological role, allows the formation of correctly charged Gln-tRNA(Gln) through the transamidation of misacylated Glu-tRNA(Gln) in organisms which lack glutaminyl-tRNA synthetase. The reaction takes place in the presence of glutamine and ATP through an activated gamma-phospho-Glu-tRNA(Gln). The polypeptide is Glutamyl-tRNA(Gln) amidotransferase subunit A (gatA) (Chlamydia pneumoniae (Chlamydophila pneumoniae)).